A 433-amino-acid polypeptide reads, in one-letter code: Homogentisate 1,2-dioxygenase (433 aa).

The active-site Proton acceptor is the H288. Positions 331 and 337 each coordinate Fe cation. Homogentisate is bound by residues Y346 and H367. H367 contacts Fe cation.

Belongs to the homogentisate dioxygenase family. In terms of assembly, hexamer; dimer of trimers. Fe cation serves as cofactor.

The enzyme catalyses homogentisate + O2 = 4-maleylacetoacetate + H(+). The protein operates within amino-acid degradation; L-phenylalanine degradation; acetoacetate and fumarate from L-phenylalanine: step 4/6. Involved in the catabolism of homogentisate (2,5-dihydroxyphenylacetate or 2,5-OH-PhAc), a central intermediate in the degradation of phenylalanine and tyrosine. Catalyzes the oxidative ring cleavage of the aromatic ring of homogentisate to yield maleylacetoacetate. This chain is Homogentisate 1,2-dioxygenase, found in Pseudomonas putida (strain W619).